Here is a 607-residue protein sequence, read N- to C-terminus: Probable LRR receptor-like serine/threonine-protein kinase At5g65240 (607 aa).

The signal sequence occupies residues 1-24 (MALLIITALVFSSLWSSVSPDAQG). Residues 25-219 (DALFALRSSL…SGDSSSRKTG (195 aa)) are Extracellular-facing. 2 N-linked (GlcNAc...) asparagine glycosylation sites follow: N74 and N110. LRR repeat units follow at residues 87-111 (LTTL…IGNL), 112-135 (SSLT…LGNL), 137-159 (NLQF…LTGL), and 160-183 (SKLI…LFKI). N-linked (GlcNAc...) asparagine glycans are attached at residues N149, N171, N187, and N192. A helical transmembrane segment spans residues 220–240 (IIAGVVSGIAVILLGFFFFFF). The Cytoplasmic portion of the chain corresponds to 241-607 (CKDKHKGYKR…QDAIELSGGR (367 aa)). T281 bears the Phosphothreonine mark. The Protein kinase domain maps to 284–568 (FSEKNVLGQG…EGEGLAERWE (285 aa)). An ATP-binding site is contributed by 290–298 (LGQGGFGKV). At T307 the chain carries Phosphothreonine. ATP is bound at residue K312. S365 carries the phosphoserine modification. D411 acts as the Proton acceptor in catalysis. Phosphothreonine is present on residues T444, T445, and T450. Phosphoserine is present on S460. Phosphothreonine is present on T461. S465 carries the post-translational modification Phosphoserine. The residue at position 541 (T541) is a Phosphothreonine.

It belongs to the protein kinase superfamily. Ser/Thr protein kinase family.

The protein localises to the cell membrane. It catalyses the reaction L-seryl-[protein] + ATP = O-phospho-L-seryl-[protein] + ADP + H(+). The catalysed reaction is L-threonyl-[protein] + ATP = O-phospho-L-threonyl-[protein] + ADP + H(+). The sequence is that of Probable LRR receptor-like serine/threonine-protein kinase At5g65240 from Arabidopsis thaliana (Mouse-ear cress).